The sequence spans 86 residues: SEED MATURATION PROTEIN 1 (86 aa).

Residues 52-86 (RIEKGKEQSAASGDQTQIQRDIKDIKGTRTDDSPR) form a disordered region. Polar residues predominate over residues 60-70 (SAASGDQTQIQ). Residues 71 to 86 (RDIKDIKGTRTDDSPR) show a composition bias toward basic and acidic residues.

Belongs to the LEA type 3 family.

Protein chaperone involved in seed maturation and dormancy maintenance after high temperature fluctuation (e.g. secondary dormancy after 3 days at 40 degrees Celsius), probably by protecting heat labile proteins required for secondary dormancy (e.g. G6PDH, HOP3, SR45, ECP63, SCL33, RPL32B, ChlADR1, MSBP1, MBF1B, At3g01690, At1g15280, At1g15290, At2g31410, At1g11630, At1g65090, EMB2279, EMB1674 and RPL35C). The chain is SEED MATURATION PROTEIN 1 from Arabidopsis thaliana (Mouse-ear cress).